Here is a 472-residue protein sequence, read N- to C-terminus: Glutamate--tRNA ligase 2 (472 aa).

The short motif at 10–20 is the 'HIGH' region element; sequence PSPTGYLHIGG. Zn(2+) contacts are provided by cysteine 99, cysteine 101, cysteine 126, and aspartate 128. A compositionally biased stretch (basic and acidic residues) spans 112–130; the sequence is EQQARKEKPRYDGRCRDLD. Residues 112–137 are disordered; it reads EQQARKEKPRYDGRCRDLDGPPSEEV. The short motif at 240–244 is the 'KMSKS' region element; the sequence is RLSKR. An ATP-binding site is contributed by lysine 243.

The protein belongs to the class-I aminoacyl-tRNA synthetase family. Glutamate--tRNA ligase type 1 subfamily. In terms of assembly, monomer. Requires Zn(2+) as cofactor.

It localises to the cytoplasm. It catalyses the reaction tRNA(Glu) + L-glutamate + ATP = L-glutamyl-tRNA(Glu) + AMP + diphosphate. Catalyzes the attachment of glutamate to tRNA(Glu) in a two-step reaction: glutamate is first activated by ATP to form Glu-AMP and then transferred to the acceptor end of tRNA(Glu). The sequence is that of Glutamate--tRNA ligase 2 from Halorhodospira halophila (strain DSM 244 / SL1) (Ectothiorhodospira halophila (strain DSM 244 / SL1)).